The chain runs to 60 residues: Small, acid-soluble spore protein H (60 aa).

It belongs to the SspH family.

The protein localises to the spore core. In Bacillus velezensis (strain DSM 23117 / BGSC 10A6 / LMG 26770 / FZB42) (Bacillus amyloliquefaciens subsp. plantarum), this protein is Small, acid-soluble spore protein H.